We begin with the raw amino-acid sequence, 56 residues long: Trypsin inhibitor 1 (56 aa).

The N-terminal stretch at 1 to 25 is a signal peptide; it reads MATTMAKLITLVVLAILAFVEVSVS. The propeptide occupies 26–39; the sequence is GYKTSISTITIEDN. Positions 40–53 form a cross-link, cyclopeptide (Gly-Asp); sequence GRCTKSIPPICFPD. An intrachain disulfide couples cysteine 42 to cysteine 50. The propeptide occupies 54–56; that stretch reads GRP.

This is a cyclic peptide.

Its function is as follows. Inhibits trypsin, cathepsin G, elastase, chymotrypsin and thrombin. Does not inhibit factor Xa. In Helianthus annuus (Common sunflower), this protein is Trypsin inhibitor 1.